A 2178-amino-acid chain; its full sequence is Streptococcal hemagglutinin (2178 aa).

The N-terminal stretch at 1-90 (MFFKRQKGQY…AVVTSSSVYA (90 aa)) is a signal peptide. Positions 91 to 137 (EEEQALEKVIDTRDVLATRGEAVLSEEAATTLSSEGANPVESLSDTL) are non-repeat region 1 (NR1). The segment at 138-219 (SASESASANS…SLISSDSSNS (82 aa)) is ser-rich region 1 (SR1). Low complexity predominate over residues 192-244 (TSQSFSSTTSSTQSSNNESLISSDSSNSLNTNQSVSARNQNARVRTRRAVAAN). 11 disordered regions span residues 192-246 (TSQS…ANDT), 495-557 (VSAS…SVSA), 584-653 (SAST…SVSA), 836-857 (SASTSASVSASESASTSASVSA), 884-917 (SASTSASVSASESASTSASVSASESASTSASVSA), 944-993 (SAST…SESA), 1020-1289 (SASV…SVSA), 1341-1390 (ASTS…ESAS), 1488-1685 (SASV…SVSA), 1725-1901 (ASTS…SAST), and 2119-2151 (LSQSLSDSQSTSATQSMHDRISKGQLPRTGESE). A non-repeat region 2 (NR2) region spans residues 220–449 (LNTNQSVSAR…ANRVVKDLQI (230 aa)). Positions 450–2143 (SKSNSASQSS…SMHDRISKGQ (1694 aa)) are ser-rich region 2 (SR2). The span at 2119 to 2130 (LSQSLSDSQSTS) shows a compositional bias: low complexity. The LPXTG sorting signal motif lies at 2144 to 2148 (LPRTG). T2147 carries the pentaglycyl murein peptidoglycan amidated threonine modification. Positions 2148 to 2178 (GESESKASILALGIGALGLAFKKRKKNESED) are cleaved as a propeptide — removed by sortase.

It belongs to the serine-rich repeat protein (SRRP) family. Post-translationally, the protein is glycosylated in vivo; constructs without SR1 and SR2 are not glycosylated.

It localises to the secreted. It is found in the cell wall. Its function is as follows. A cell wall protein involved with PadA in host cell interactions required for colonization and pathogensis. Mediates hemagglutination and adherence to ghst glycoproteins. Recognizes fetuin-A (AHSG), a highly glycosylated human plasma protein, also involved in recognition of human platelets, probably via platelet glycoprotein Ib alpha (GP1BA). Acts in concert with PadA to promote binding to glycosylated human fibronectin (FN1) and vitronectin (VTN), and biofilm formation. Plays a major role in fibronectin and vitronectin binding; binding is mediated by glycosylated regions. Probably mediates interaction of PadA with resting platelets. This Streptococcus gordonii (strain Challis / ATCC 35105 / BCRC 15272 / CH1 / DL1 / V288) protein is Streptococcal hemagglutinin.